A 364-amino-acid polypeptide reads, in one-letter code: MVLSKYLDLPQHGAVLAEYIWIDAHFNIRSKCKTLDKKPTSIEDLPEWNFDGSSTDQAPGHDSDIYLRPAAIYPDPFRRGDNIIVLAECWNNDGTPNKFNHRHECAKLMSAHEKEVIWFGIEQEYTMFDESDNPVGWPKGGFPAPQGPYYCGVGTGKVFARDVVEAHYRACLYSGINISGINAEVMPSQWEYQVGPCEGISMADELWMSRYLLHRVAEEFGIKISFHPKPLQGDWNGAGCHTNVSTKSMREPGGMKHIEAAIEKLAARHKEHIAVYGEDNDMRLTGRHETGSIGSFSSGVANRGCSIRIPRSVAKEGYGYFEDRRPASNIDPYLVTGIMTETICGSIPDADMVEETKRGEEEGF.

A GS beta-grasp domain is found at 15–94 (VLAEYIWIDA…VLAECWNNDG (80 aa)). A GS catalytic domain is found at 101 to 364 (HRHECAKLMS…ETKRGEEEGF (264 aa)).

It belongs to the glutamine synthetase family. Homooctamer.

It localises to the cytoplasm. It carries out the reaction L-glutamate + NH4(+) + ATP = L-glutamine + ADP + phosphate + H(+). In Yarrowia lipolytica (strain CLIB 122 / E 150) (Yeast), this protein is Glutamine synthetase (GLN1).